Here is a 746-residue protein sequence, read N- to C-terminus: tRNA(Met) cytidine acetyltransferase TmcA (746 aa).

The tract at residues 181–200 (ARAETGGNPPSPGDSACRTE) is disordered. ATP contacts are provided by residues glutamine 202, 228–237 (GRGKSAALGI), and arginine 370. The region spanning 405 to 617 (VAVERLDRDA…VHLPHQLADP (213 aa)) is the N-acetyltransferase domain. Acetyl-CoA-binding positions include 517–519 (IAV), 524–530 (QGQGLGT), glutamate 557, and arginine 564.

Belongs to the RNA cytidine acetyltransferase family. TmcA subfamily.

The protein resides in the cytoplasm. The catalysed reaction is cytidine(34) in elongator tRNA(Met) + acetyl-CoA + ATP + H2O = N(4)-acetylcytidine(34) in elongator tRNA(Met) + ADP + phosphate + CoA + H(+). Functionally, catalyzes the formation of N(4)-acetylcytidine (ac(4)C) at the wobble position of tRNA(Met), by using acetyl-CoA as an acetyl donor and ATP (or GTP). The polypeptide is tRNA(Met) cytidine acetyltransferase TmcA (Nitrosococcus halophilus (strain Nc4)).